The primary structure comprises 206 residues: Protein DEHYDRATION-INDUCED 19 (206 aa).

At T105 the chain carries Phosphothreonine. S107 carries the phosphoserine modification. A disordered region spans residues 142–167; it reads SSFISPTRSQSSPAPRQTKNVSEDKQ. The segment covering 143–161 has biased composition (polar residues); it reads SFISPTRSQSSPAPRQTKN.

It belongs to the Di19 family. As to quaternary structure, interacts with ADO2/LKP2, CPK11 and CPK4. Weak interaction with CPK12 and no interactions with CPK1, CPK5 or CPK26. In terms of processing, phosphorylated within the NLS/NES region. In terms of tissue distribution, expressed in seedlings, roots, leaves, stems, flowers and siliques.

The protein localises to the nucleus. In Arabidopsis thaliana (Mouse-ear cress), this protein is Protein DEHYDRATION-INDUCED 19 (DI19-1).